The sequence spans 531 residues: Peptide chain release factor 3 (531 aa).

The 270-residue stretch at 11-280 (GRRRTFAIIS…AFIRFASRPG (270 aa)) folds into the tr-type G domain. GTP contacts are provided by residues 20–27 (SHPDAGKT), 88–92 (DTPGH), and 142–145 (NKLD).

The protein belongs to the TRAFAC class translation factor GTPase superfamily. Classic translation factor GTPase family. PrfC subfamily.

The protein resides in the cytoplasm. Increases the formation of ribosomal termination complexes and stimulates activities of RF-1 and RF-2. It binds guanine nucleotides and has strong preference for UGA stop codons. It may interact directly with the ribosome. The stimulation of RF-1 and RF-2 is significantly reduced by GTP and GDP, but not by GMP. This is Peptide chain release factor 3 from Gloeobacter violaceus (strain ATCC 29082 / PCC 7421).